A 136-amino-acid chain; its full sequence is Magnetite biomineralization protein Mms6 (136 aa).

Topologically, residues 1–85 (MGEMEREGAT…AVGGTIWSGK (85 aa)) are cytoplasmic. The segment at 86–95 (GLALGLGMGL) is GL repeat. Residues 86-106 (GLALGLGMGLGAWGPLILGVV) traverse the membrane as a helical segment. Residues 107–136 (GAGAVYAYMKSRDIEAAQSDEEVELRDALS) lie on the Lumenal side of the membrane. Residues 115–136 (MKSRDIEAAQSDEEVELRDALS) are MIC, self-assembles, binds magnetite, Fe(2+) and Fe(3+).

It belongs to the magnetosome Mms6 family. As to quaternary structure, full length protein oligomerizes and interacts with MamA. In terms of processing, may undergo cleavage.

The protein localises to the magnetosome membrane. In terms of biological role, promotes the formation of magnetite in Fe(2+)-rich conditions, when magnetite is not readily formed. Binds both Fe(2+) and Fe(3+). May help control the production of crystals with a specific morphology. May function with MamX, MamY amd MamZ in biomineralization. The 4 genes of this operon collectively influence magnetosome size and number. The chain is Magnetite biomineralization protein Mms6 from Magnetospirillum gryphiswaldense (strain DSM 6361 / JCM 21280 / NBRC 15271 / MSR-1).